The primary structure comprises 216 residues: Adenylate kinase (216 aa).

Position 13–18 (13–18 (GAGKGT)) interacts with ATP. An NMP region spans residues 33–66 (TTGDALRANKDMDISDMDTEYDTPREYMEAGDLV). AMP is bound by residues T34, R39, 64–66 (DLV), 89–92 (GYPR), and Q96. The tract at residues 125-162 (GRRVCDDCGTNYHVEFNQPEEDGVCDECGGDLIQRDDD) is LID. Position 126 (R126) interacts with ATP. Zn(2+)-binding residues include C129, C132, C149, and C152. R159 and R170 together coordinate AMP. An ATP-binding site is contributed by Q198.

Belongs to the adenylate kinase family. As to quaternary structure, monomer.

Its subcellular location is the cytoplasm. It carries out the reaction AMP + ATP = 2 ADP. Its pathway is purine metabolism; AMP biosynthesis via salvage pathway; AMP from ADP: step 1/1. Its function is as follows. Catalyzes the reversible transfer of the terminal phosphate group between ATP and AMP. Plays an important role in cellular energy homeostasis and in adenine nucleotide metabolism. The protein is Adenylate kinase of Haloarcula marismortui (strain ATCC 43049 / DSM 3752 / JCM 8966 / VKM B-1809) (Halobacterium marismortui).